Consider the following 95-residue polypeptide: Aspartyl/glutamyl-tRNA(Asn/Gln) amidotransferase subunit C (95 aa).

Belongs to the GatC family. Heterotrimer of A, B and C subunits.

It carries out the reaction L-glutamyl-tRNA(Gln) + L-glutamine + ATP + H2O = L-glutaminyl-tRNA(Gln) + L-glutamate + ADP + phosphate + H(+). It catalyses the reaction L-aspartyl-tRNA(Asn) + L-glutamine + ATP + H2O = L-asparaginyl-tRNA(Asn) + L-glutamate + ADP + phosphate + 2 H(+). Functionally, allows the formation of correctly charged Asn-tRNA(Asn) or Gln-tRNA(Gln) through the transamidation of misacylated Asp-tRNA(Asn) or Glu-tRNA(Gln) in organisms which lack either or both of asparaginyl-tRNA or glutaminyl-tRNA synthetases. The reaction takes place in the presence of glutamine and ATP through an activated phospho-Asp-tRNA(Asn) or phospho-Glu-tRNA(Gln). The protein is Aspartyl/glutamyl-tRNA(Asn/Gln) amidotransferase subunit C of Rhizorhabdus wittichii (strain DSM 6014 / CCUG 31198 / JCM 15750 / NBRC 105917 / EY 4224 / RW1) (Sphingomonas wittichii).